Reading from the N-terminus, the 619-residue chain is Sodium-dependent dopamine transporter (619 aa).

Over 1-56 (MSKSKCSVGPMSSVVAPAKESNAVGPREVELILVKEQNGVQLTNSTLINPPQTPVE) the chain is Cytoplasmic. Residues 57–95 (AQERETWSKKIDFLLSVIGFAVDLANVWRFPYLCYKNGG) traverse the membrane as a discontinuously helical segment. Residues Gly-75, Ala-77, Val-78, Asp-79, and Asn-82 each coordinate Na(+). Asp-79 is a dopamine binding site. 2 helical membrane passes run 96–127 (GAFLVPYLLFMVIAGMPLFYMELALGQFNREG) and 128–171 (AAGV…FSSF). Ser-149 and Gly-153 together coordinate dopamine. Residues 172 to 235 (TMDLPWIHCN…SRGIDDLGPP (64 aa)) lie on the Extracellular side of the membrane. Cys-180 and Cys-189 form a disulfide bridge. N-linked (GlcNAc...) asparagine glycans are attached at residues Asn-181, Asn-188, Asn-196, and Asn-204. Helical transmembrane passes span 236 to 255 (RWQLTACLVLVIVLLYFSLW) and 256 to 286 (KGVKTSGKVVWITATMPYVVLTALLLRGVTL). The Extracellular portion of the chain corresponds to 287–305 (PGAMDGIRAYLSVDFYRLC). The discontinuously helical transmembrane segment at 306-334 (EASVWIDAATQVCFSLGVGFGVLIAFSSY) threads the bilayer. Gln-316 provides a ligand contact to chloride. Position 319 (Phe-319) interacts with dopamine. Na(+) is bound by residues Ser-320 and Asn-352. Ser-320 is a chloride binding site. The helical transmembrane segment at 335–375 (NKFTNNCYRDAIITTSINSLTSFSSGFVVFSFLGYMAQKHN) threads the bilayer. Residue Ser-356 participates in chloride binding. The Extracellular portion of the chain corresponds to 376-399 (VPIRDVATDGPGLIFIIYPEAIAT). Helical transmembrane passes span 400-441 (LPLS…QLLH), 442-465 (RHRELFTLGIVLATFLLSLFCVTN), and 466-498 (GGIYVFTLLDHFAAGTSILFGVLIEAIGVAWFY). Positions 417, 420, and 421 each coordinate Na(+). Residues Ser-421 and Ala-422 each coordinate dopamine. The Cytoplasmic portion of the chain corresponds to 499–515 (GVQQFSDDIKQMTGQRP). A helical transmembrane segment spans residues 516–541 (NLYWRLCWKLVSPCFLLYVVVVSIVT). Topologically, residues 542-552 (FRPPHYGAYIF) are extracellular. Residues 553–582 (PDWANALGWIIATSSMAMVPIYATYKFCSL) traverse the membrane as a helical segment. The interval 560–589 (GWIIATSSMAMVPIYATYKFCSLPGSFREK) is interaction with TGFB1I1. Residues 583–619 (PGSFREKLAYAITPEKDHQLVDRGEVRQFTLRHWLLL) are Cytoplasmic-facing.

The protein belongs to the sodium:neurotransmitter symporter (SNF) (TC 2.A.22) family. SLC6A3 subfamily. Monomer. Homooligomer; disulfide-linked. Interacts with PRKCABP and TGFB1I1. Interacts (via N-terminus) with SYNGR3 (via N-terminus). Interacts with SLC18A2. Interacts with TOR1A (ATP-bound); TOR1A regulates SLC6A3 subcellular location. Interacts with alpha-synuclein/SNCA. Interacts with SEPTIN4. In terms of tissue distribution, brain. Expressed in the substantia nigra and ventral tegmental area, regions that contain dopaminergic cell bodies.

The protein localises to the cell membrane. The protein resides in the cell projection. It is found in the neuron projection. Its subcellular location is the axon. The enzyme catalyses dopamine(out) + chloride(out) + Na(+)(out) = dopamine(in) + chloride(in) + Na(+)(in). It carries out the reaction (R)-noradrenaline(out) + chloride(out) + Na(+)(out) = (R)-noradrenaline(in) + chloride(in) + Na(+)(in). The catalysed reaction is dopamine(out) + chloride(out) + 2 Na(+)(out) = dopamine(in) + chloride(in) + 2 Na(+)(in). Its activity is regulated as follows. Inhibited by mazindol, cocaine, desipramine, GBR 12783 dihydrochloride, GBR 12909 dihydrochloride and nomifensine. Inhibited by zinc ions. In terms of biological role, mediates sodium- and chloride-dependent transport of dopamine. Also mediates sodium- and chloride-dependent transport of norepinephrine (also known as noradrenaline). Regulator of light-dependent retinal hyaloid vessel regression, downstream of OPN5 signaling. This chain is Sodium-dependent dopamine transporter (Slc6a3), found in Rattus norvegicus (Rat).